The primary structure comprises 101 residues: Small ribosomal subunit protein uS14 (101 aa).

It belongs to the universal ribosomal protein uS14 family. As to quaternary structure, part of the 30S ribosomal subunit. Contacts proteins S3 and S10.

Its function is as follows. Binds 16S rRNA, required for the assembly of 30S particles and may also be responsible for determining the conformation of the 16S rRNA at the A site. This is Small ribosomal subunit protein uS14 from Francisella tularensis subsp. holarctica (strain FTNF002-00 / FTA).